Consider the following 467-residue polypeptide: Putative vacuolar protein sorting-associated protein TDA6 (467 aa).

Residues 8–28 form a helical membrane-spanning segment; the sequence is ILLWFLIVDLSVIRALVLPPL. N-linked (GlcNAc...) asparagine glycans are attached at residues N61, N124, and N141.

It belongs to the VPS62 family.

The protein resides in the membrane. Its function is as follows. Involved in vacuolar protein sorting. In Saccharomyces cerevisiae (strain ATCC 204508 / S288c) (Baker's yeast), this protein is Putative vacuolar protein sorting-associated protein TDA6 (TDA6).